The following is a 113-amino-acid chain: uncharacterized protein (113 aa).

The SWIM-type zinc-finger motif lies at 49 to 91 (FFVVVGKEEYVVEGGFCTCPDFLVNLKGKSPCAHIIAVEVAKI).

This is an uncharacterized protein from Archaeoglobus fulgidus (strain ATCC 49558 / DSM 4304 / JCM 9628 / NBRC 100126 / VC-16).